The chain runs to 207 residues: Large ribosomal subunit protein uL4 (207 aa).

This sequence belongs to the universal ribosomal protein uL4 family. As to quaternary structure, part of the 50S ribosomal subunit.

Its function is as follows. One of the primary rRNA binding proteins, this protein initially binds near the 5'-end of the 23S rRNA. It is important during the early stages of 50S assembly. It makes multiple contacts with different domains of the 23S rRNA in the assembled 50S subunit and ribosome. Functionally, forms part of the polypeptide exit tunnel. The protein is Large ribosomal subunit protein uL4 of Rickettsia conorii (strain ATCC VR-613 / Malish 7).